Reading from the N-terminus, the 754-residue chain is Ubiquitin carboxyl-terminal hydrolase 9 (754 aa).

Residues 1–14 are compositionally biased toward basic residues; the sequence is MIKRWLSVNRKKSH. The disordered stretch occupies residues 1–76; that stretch reads MIKRWLSVNR…SKFSSQTDNL (76 aa). Low complexity predominate over residues 42–58; sequence SIAKSPSAKSSTSSIPS. The region spanning 134–667 is the USP domain; that stretch reads FGYENFGNTC…TAYVLFYKET (534 aa). Residue C143 is the Nucleophile of the active site. Residues 194–209 show a composition bias toward polar residues; the sequence is ETSTNSGNSNTGYQSN. Positions 194-273 are disordered; sequence ETSTNSGNSN…DNNEMERPQP (80 aa). The segment covering 222-233 has biased composition (low complexity); the sequence is QSDQDNSSSSTQ. The segment covering 250-272 has biased composition (basic and acidic residues); the sequence is GKDKSNYKDSAKKDDNNEMERPQ. H618 serves as the catalytic Proton acceptor. The tract at residues 726 to 754 is disordered; sequence VKTAETKTPLNDKKRNKQKRKSRILSFIK. A compositionally biased stretch (basic and acidic residues) spans 727–738; the sequence is KTAETKTPLNDK. The segment covering 739–748 has biased composition (basic residues); the sequence is KRNKQKRKSR.

It belongs to the peptidase C19 family.

The enzyme catalyses Thiol-dependent hydrolysis of ester, thioester, amide, peptide and isopeptide bonds formed by the C-terminal Gly of ubiquitin (a 76-residue protein attached to proteins as an intracellular targeting signal).. This is Ubiquitin carboxyl-terminal hydrolase 9 (UBP9) from Saccharomyces cerevisiae (strain ATCC 204508 / S288c) (Baker's yeast).